Consider the following 136-residue polypeptide: Histone H3 (136 aa).

Residues 1–43 (MARTKQTARKSTGAKAPRKQLASKAARKSAPATGGIKKPHRFR) are disordered. An N6,N6,N6-trimethyllysine; alternate mark is found at lysine 5 and lysine 10. Lysine 5 carries the N6,N6-dimethyllysine; alternate modification. An N6-acetyllysine; alternate mark is found at lysine 5 and lysine 10. Lysine 5 carries the N6-methyllysine; alternate modification. Serine 11 bears the Phosphoserine mark. 3 positions are modified to N6-acetyllysine: lysine 15, lysine 19, and lysine 24. Lysine 28 and lysine 37 each carry N6,N6,N6-trimethyllysine; alternate. N6,N6-dimethyllysine; alternate occurs at positions 28 and 37. 3 positions are modified to N6-acetyllysine; alternate: lysine 28, lysine 37, and lysine 57. N6-methyllysine; alternate is present on residues lysine 28, lysine 37, and lysine 57. Lysine 80 is subject to N6-methyllysine.

The protein belongs to the histone H3 family. As to quaternary structure, the nucleosome is a histone octamer containing two molecules each of H2A, H2B, H3 and H4 assembled in one H3-H4 heterotetramer and two H2A-H2B heterodimers. The octamer wraps approximately 147 bp of DNA. In terms of processing, phosphorylated to form H3S10ph. H3S10ph promotes subsequent H3K14ac formation by GCN5. H3S10ph is only found in the mitotically dividing MIC, but not in the amitotically dividing MAC. H3S10ph is correlated with chromosome condensation during mitotic or meiotic micronuclear divisions. Acetylation of histone H3 leads to transcriptional activation. H3K14ac formation by GCN5 is promoted by H3S10ph. H3K9acK14ac is the preferred acetylated form of newly synthesized H3. Acetylation occurs almost exclusively in the MAC. Post-translationally, methylated to form H3K4me. H3K4me is only found in the transcriptionally active MAC. Methylated to form H3K9me in developing MACs during conjugation, when genome-wide DNA elimination occurs. At this stage, H3K9me specifically occurs on DNA sequences being eliminated (IES), probably targeted by small scan RNAs (scnRNAs) bound to IES, and is required for efficient IES elimination. H3K9me is required for the interaction with the chromodomains of PDD1 and PDD3. In terms of processing, the full-length protein H3S (slow migrating) is converted to H3F (fast migrating) by proteolytic removal of the first 6 residues. H3F is unique to MIC, and processing seems to occur regularly each generation at a specific point in the cell cycle.

The protein resides in the nucleus. Its subcellular location is the chromosome. In terms of biological role, core component of nucleosome. Nucleosomes wrap and compact DNA into chromatin, limiting DNA accessibility to the cellular machineries which require DNA as a template. Histones thereby play a central role in transcription regulation, DNA repair, DNA replication and chromosomal stability. DNA accessibility is regulated via a complex set of post-translational modifications of histones, also called histone code, and nucleosome remodeling. The polypeptide is Histone H3 (Tetrahymena pyriformis).